The sequence spans 458 residues: Argininosuccinate lyase (458 aa).

This sequence belongs to the lyase 1 family. Argininosuccinate lyase subfamily.

The protein resides in the cytoplasm. It carries out the reaction 2-(N(omega)-L-arginino)succinate = fumarate + L-arginine. It participates in amino-acid biosynthesis; L-arginine biosynthesis; L-arginine from L-ornithine and carbamoyl phosphate: step 3/3. The protein is Argininosuccinate lyase of Salmonella typhi.